The chain runs to 644 residues: ATP-dependent zinc metalloprotease FtsH (644 aa).

Residues 1–4 (MAKN) lie on the Cytoplasmic side of the membrane. The chain crosses the membrane as a helical span at residues 5 to 25 (LILWLVIAVVLMSVFQSFGPS). Over 26–98 (ESNGRKVDYS…VGEPPEEPSL (73 aa)) the chain is Periplasmic. A helical transmembrane segment spans residues 99–119 (LASIFISWFPMLLLIGVWIFF). Residues 120-644 (MRQMQGGGGK…NTMSEQLGDK (525 aa)) lie on the Cytoplasmic side of the membrane. 192 to 199 (GPPGTGKT) is an ATP binding site. Zn(2+) is bound at residue His-414. The active site involves Glu-415. 2 residues coordinate Zn(2+): His-418 and Asp-492. The interval 598–644 (VRPPAGWEEPGASNNAGDNGSPKAPRPVDEPRTPNPGNTMSEQLGDK) is disordered. The segment covering 632 to 644 (NPGNTMSEQLGDK) has biased composition (polar residues).

This sequence in the central section; belongs to the AAA ATPase family. It in the C-terminal section; belongs to the peptidase M41 family. As to quaternary structure, homohexamer. Zn(2+) serves as cofactor.

The protein localises to the cell inner membrane. Functionally, acts as a processive, ATP-dependent zinc metallopeptidase for both cytoplasmic and membrane proteins. Plays a role in the quality control of integral membrane proteins. This chain is ATP-dependent zinc metalloprotease FtsH, found in Escherichia coli O157:H7.